Reading from the N-terminus, the 387-residue chain is Exodeoxyribonuclease 7 large subunit (387 aa).

It belongs to the XseA family. In terms of assembly, heterooligomer composed of large and small subunits.

It is found in the cytoplasm. The enzyme catalyses Exonucleolytic cleavage in either 5'- to 3'- or 3'- to 5'-direction to yield nucleoside 5'-phosphates.. Functionally, bidirectionally degrades single-stranded DNA into large acid-insoluble oligonucleotides, which are then degraded further into small acid-soluble oligonucleotides. The sequence is that of Exodeoxyribonuclease 7 large subunit from Campylobacter hominis (strain ATCC BAA-381 / DSM 21671 / CCUG 45161 / LMG 19568 / NCTC 13146 / CH001A).